Consider the following 224-residue polypeptide: Charged multivesicular body protein 4b (224 aa).

The disordered stretch occupies residues 1-23 (MSVFGKLFGAGGGKAGKGGPTPQ). Residue Ser-2 is modified to N-acetylserine. The segment at 2-153 (SVFGKLFGAG…EISTAISKPV (152 aa)) is intramolecular interaction with C-terminus. Residue Lys-6 is modified to N6-acetyllysine. Over residues 8–19 (FGAGGGKAGKGG) the composition is skewed to gly residues. Residues 23 to 183 (QEAIQRLRDT…EELDKNLLEI (161 aa)) are a coiled coil. The residue at position 114 (Lys-114) is an N6-acetyllysine. Positions 154 to 224 (GFGEEFDEDE…KELENWAGSM (71 aa)) are intramolecular interaction with N-terminus. A phosphoserine mark is found at Ser-184 and Ser-223. Residues 185 to 224 (GPETVPLPNVPSVALPSKPAKKKEEEDDDMKELENWAGSM) form a disordered region.

It belongs to the SNF7 family. In terms of assembly, probable core component of the endosomal sorting required for transport complex III (ESCRT-III). ESCRT-III components are thought to multimerize to form a flat lattice on the perimeter membrane of the endosome. Several assembly forms of ESCRT-III may exist that interact and act sequentially. Interacts with CHMP6 and CHMP4C. Interacts with PDCD6IP; the interaction is direct. Interacts with VPS4A; the interaction is direct. Interacts with VPS4B; the interaction is direct. Interacts with CHMP7. Interacts with CFTR; the interaction requires misfolded CFTR. Interacts with PTPN23. Interacts with CC2D1B. ISGylated. Isgylation weakens its interaction with VPS4A.

It localises to the cytoplasm. The protein localises to the cytosol. It is found in the late endosome membrane. Its subcellular location is the midbody. The protein resides in the nucleus envelope. Its function is as follows. Probable core component of the endosomal sorting required for transport complex III (ESCRT-III) which is involved in multivesicular bodies (MVBs) formation and sorting of endosomal cargo proteins into MVBs. MVBs contain intraluminal vesicles (ILVs) that are generated by invagination and scission from the limiting membrane of the endosome and mostly are delivered to lysosomes enabling degradation of membrane proteins, such as stimulated growth factor receptors, lysosomal enzymes and lipids. The MVB pathway appears to require the sequential function of ESCRT-O, -I,-II and -III complexes. ESCRT-III proteins mostly dissociate from the invaginating membrane before the ILV is released. The ESCRT machinery also functions in topologically equivalent membrane fission events, such as the terminal stages of cytokinesis. Together with SPAST, the ESCRT-III complex promotes nuclear envelope sealing and mitotic spindle disassembly during late anaphase. Plays a role in the endosomal sorting pathway. ESCRT-III proteins are believed to mediate the necessary vesicle extrusion and/or membrane fission activities, possibly in conjunction with the AAA ATPase VPS4. When overexpressed, membrane-assembled circular arrays of CHMP4B filaments can promote or stabilize negative curvature and outward budding. CHMP4A/B/C are required for the exosomal release of SDCBP, CD63 and syndecan. Majority of the protein exists in a folded closed conformation. This chain is Charged multivesicular body protein 4b (Chmp4b), found in Mus musculus (Mouse).